We begin with the raw amino-acid sequence, 97 residues long: Large ribosomal subunit protein eL21 (97 aa).

It belongs to the eukaryotic ribosomal protein eL21 family.

The protein is Large ribosomal subunit protein eL21 of Methanococcus vannielii (strain ATCC 35089 / DSM 1224 / JCM 13029 / OCM 148 / SB).